Consider the following 24-residue polypeptide: Caerulein precursor fragment B4 (24 aa).

Expressed by the skin glands.

The protein resides in the secreted. Has antibacterial and antifungal activity. This chain is Caerulein precursor fragment B4, found in Xenopus borealis (Kenyan clawed frog).